A 209-amino-acid chain; its full sequence is MKAVVQRVTRASVTVGGEQISAIGRGICVLLGISLEDTQKELEHMVRKILNLRVFEDESGKHWSKSVMDKQYEILCVSQFTLQCVLKGNKPDFHLAMPTEQAEGFYNSFLEQLRKTYRPELIKDGKFGAYMQVHIQNDGPVTIELESPAPGTATSDPKQLSKLEKQQQRKEKTRAKGPSESSKERNTPRKEDRSASSGAEGDVSSEREP.

Residues valine 4, glutamine 6, and cysteine 28 each coordinate Mg(2+). The Gly-cisPro motif, important for rejection of L-amino acids signature appears at 139–140; the sequence is GP. The interval 142-209 is disordered; the sequence is TIELESPAPG…EGDVSSEREP (68 aa). Composition is skewed to basic and acidic residues over residues 159 to 170 and 181 to 194; these read QLSKLEKQQQRK and SSKE…EDRS. Phosphoserine is present on residues serine 197, serine 204, and serine 205.

This sequence belongs to the DTD family. As to quaternary structure, homodimer. Interacts with CDC45 and TOPBP1. Preferentially phosphorylated in cells arrested early in S phase. Phosphorylation in the C-terminus weakens the interaction with CDC45. In terms of tissue distribution, expressed in many adult and fetal tissues. Highest levels in testis, ovary, spleen and in adult and fetal brain.

It localises to the nucleus. The protein resides in the cytoplasm. The enzyme catalyses glycyl-tRNA(Ala) + H2O = tRNA(Ala) + glycine + H(+). The catalysed reaction is a D-aminoacyl-tRNA + H2O = a tRNA + a D-alpha-amino acid + H(+). Possible ATPase involved in DNA replication, may facilitate loading of CDC45 onto pre-replication complexes. Its function is as follows. An aminoacyl-tRNA editing enzyme that deacylates mischarged D-aminoacyl-tRNAs. Also deacylates mischarged glycyl-tRNA(Ala), protecting cells against glycine mischarging by AlaRS. Acts via tRNA-based rather than protein-based catalysis; rejects L-amino acids rather than detecting D-amino acids in the active site. By recycling D-aminoacyl-tRNA to D-amino acids and free tRNA molecules, this enzyme counteracts the toxicity associated with the formation of D-aminoacyl-tRNA entities in vivo and helps enforce protein L-homochirality. This chain is D-aminoacyl-tRNA deacylase 1 (DTD1), found in Homo sapiens (Human).